Reading from the N-terminus, the 251-residue chain is Hydroxyacylglutathione hydrolase (251 aa).

7 residues coordinate Zn(2+): histidine 53, histidine 55, aspartate 57, histidine 58, histidine 110, aspartate 127, and histidine 165.

Belongs to the metallo-beta-lactamase superfamily. Glyoxalase II family. In terms of assembly, monomer. Zn(2+) serves as cofactor.

It catalyses the reaction an S-(2-hydroxyacyl)glutathione + H2O = a 2-hydroxy carboxylate + glutathione + H(+). The protein operates within secondary metabolite metabolism; methylglyoxal degradation; (R)-lactate from methylglyoxal: step 2/2. Thiolesterase that catalyzes the hydrolysis of S-D-lactoyl-glutathione to form glutathione and D-lactic acid. The sequence is that of Hydroxyacylglutathione hydrolase from Cronobacter sakazakii (strain ATCC BAA-894) (Enterobacter sakazakii).